We begin with the raw amino-acid sequence, 77 residues long: Dermatoxin-DA1 (77 aa).

The N-terminal stretch at 1-22 (MAFLKKSLFLVLFLGLVPLFLC) is a signal peptide. Residues 23–42 (ENEKREGENEKEENDDQSEE) constitute a propeptide that is removed on maturation. Lys-76 bears the Lysine amide mark.

Belongs to the frog skin active peptide (FSAP) family. Dermatoxin subfamily. In terms of tissue distribution, expressed by the skin glands.

Its subcellular location is the secreted. In terms of biological role, possesses a potent antimicrobial activity against Gram-positive and Gram-negative bacteria. Probably acts by disturbing membrane functions with its amphipathic structure. The protein is Dermatoxin-DA1 of Agalychnis dacnicolor (Giant Mexican leaf frog).